The following is a 658-amino-acid chain: Protein kinase and PP2C-like domain-containing protein (658 aa).

In terms of domain architecture, Protein kinase spans F30–I314. ATP contacts are provided by residues I36–V44 and K57. Residue D149 is the Proton acceptor of the active site. The region spanning S392–L648 is the PPM-type phosphatase domain. Residues D428, G429, D599, and D639 each coordinate Mn(2+).

This sequence in the N-terminal section; belongs to the protein kinase superfamily. Ser/Thr protein kinase family. It in the C-terminal section; belongs to the PP2C family. The cofactor is Mg(2+). Mn(2+) serves as cofactor.

The enzyme catalyses L-seryl-[protein] + ATP = O-phospho-L-seryl-[protein] + ADP + H(+). The catalysed reaction is L-threonyl-[protein] + ATP = O-phospho-L-threonyl-[protein] + ADP + H(+). It catalyses the reaction O-phospho-L-seryl-[protein] + H2O = L-seryl-[protein] + phosphate. It carries out the reaction O-phospho-L-threonyl-[protein] + H2O = L-threonyl-[protein] + phosphate. The protein is Protein kinase and PP2C-like domain-containing protein of Arabidopsis thaliana (Mouse-ear cress).